The sequence spans 174 residues: NADH-quinone oxidoreductase subunit C (174 aa).

This sequence belongs to the complex I 30 kDa subunit family. As to quaternary structure, NDH-1 is composed of 14 different subunits. Subunits NuoB, C, D, E, F, and G constitute the peripheral sector of the complex.

It localises to the cell membrane. The catalysed reaction is a quinone + NADH + 5 H(+)(in) = a quinol + NAD(+) + 4 H(+)(out). Its function is as follows. NDH-1 shuttles electrons from NADH, via FMN and iron-sulfur (Fe-S) centers, to quinones in the respiratory chain. The immediate electron acceptor for the enzyme in this species is believed to be ubiquinone. Couples the redox reaction to proton translocation (for every two electrons transferred, four hydrogen ions are translocated across the cytoplasmic membrane), and thus conserves the redox energy in a proton gradient. The chain is NADH-quinone oxidoreductase subunit C from Roseiflexus sp. (strain RS-1).